Reading from the N-terminus, the 301-residue chain is GTP cyclohydrolase FolE2 (301 aa).

It belongs to the GTP cyclohydrolase IV family.

The enzyme catalyses GTP + H2O = 7,8-dihydroneopterin 3'-triphosphate + formate + H(+). It participates in cofactor biosynthesis; 7,8-dihydroneopterin triphosphate biosynthesis; 7,8-dihydroneopterin triphosphate from GTP: step 1/1. Functionally, converts GTP to 7,8-dihydroneopterin triphosphate. In Pseudomonas putida (strain GB-1), this protein is GTP cyclohydrolase FolE2.